The following is a 100-amino-acid chain: Small ribosomal subunit protein uS14c (100 aa).

The protein belongs to the universal ribosomal protein uS14 family. As to quaternary structure, part of the 30S ribosomal subunit.

The protein localises to the plastid. It is found in the chloroplast. Functionally, binds 16S rRNA, required for the assembly of 30S particles. This is Small ribosomal subunit protein uS14c from Nephroselmis olivacea (Green alga).